The sequence spans 163 residues: SKP1-like protein 4 (163 aa).

The tract at residues 105–163 is interaction with the F-box domain of F-box proteins; it reads ILAANYLNIGGLLDLTCKAVADQMRGKTPEQMRAHFNIKNDYTPEEEAEVRNENKWAFE.

It belongs to the SKP1 family. In terms of assembly, part of a SCF (SKP1-cullin-F-box) protein ligase complex. Interacts with At1g56610, At1g67340, At3g62230, At3g59000, At4g27050, At1g55000, SKIP16 and SKIP32. Mostly expressed in inflorescence and siliques, and, to a lower extent, in seedlings, roots, and stems.

The protein resides in the nucleus. It functions in the pathway protein modification; protein ubiquitination. Involved in ubiquitination and subsequent proteasomal degradation of target proteins. Together with CUL1, RBX1 and a F-box protein, it forms a SCF E3 ubiquitin ligase complex. The functional specificity of this complex depends on the type of F-box protein. In the SCF complex, it serves as an adapter that links the F-box protein to CUL1. This chain is SKP1-like protein 4 (ASK4), found in Arabidopsis thaliana (Mouse-ear cress).